Reading from the N-terminus, the 3106-residue chain is Probable polyketide synthase 29 (3106 aa).

Residues 1 to 11 (MVQNTDNTRNS) show a composition bias toward polar residues. The tract at residues 1–20 (MVQNTDNTRNSKLIRDRNDY) is disordered. One can recognise a Ketosynthase family 3 (KS3) domain in the interval 28 to 461 (SGDIAVIGIG…GSNVCLILSE (434 aa)). Active-site for beta-ketoacyl synthase activity residues include cysteine 200, histidine 339, and histidine 384. An acyl/malonyl transferase region spans residues 661-694 (GVSADIIIGHSLGEVSSPYCSGMIDFQTLCYLTY). Serine 671 (for acyl/malonyl transferase activity) is an active-site residue. Residues 961–1082 (PSIHGLGNNT…GNFSLTKHNS (122 aa)) are N-terminal hotdog fold. The region spanning 961–1266 (PSIHGLGNNT…CALVSLDSNP (306 aa)) is the PKS/mFAS DH domain. The active-site Proton acceptor; for dehydratase activity is the histidine 994. The C-terminal hotdog fold stretch occupies residues 1099–1266 (NFTSISKQDF…CALVSLDSNP (168 aa)). The Proton donor; for dehydratase activity role is filled by aspartate 1171. Residues 2533 to 2610 (NNNEIIRSTI…QSIEIILSAH (78 aa)) form the Carrier domain. Serine 2570 bears the O-(pantetheine 4'-phosphoryl)serine mark. Residues 2609–2656 (AHNNNNKNNNNNNNINNNNKNNNNNNNKNNNNINNNINNNKNNNNNNN) adopt a coiled-coil conformation. The segment at 2614-2656 (NKNNNNNNNINNNNKNNNNNNNKNNNNINNNINNNKNNNNNNN) is disordered.

The cofactor is pantetheine 4'-phosphate.

Probable polyketide synthase. This is Probable polyketide synthase 29 (pks29) from Dictyostelium discoideum (Social amoeba).